Consider the following 180-residue polypeptide: Large ribosomal subunit protein uL6 (180 aa).

It belongs to the universal ribosomal protein uL6 family. In terms of assembly, part of the 50S ribosomal subunit.

This protein binds to the 23S rRNA, and is important in its secondary structure. It is located near the subunit interface in the base of the L7/L12 stalk, and near the tRNA binding site of the peptidyltransferase center. The sequence is that of Large ribosomal subunit protein uL6 from Clostridium tetani (strain Massachusetts / E88).